Here is a 638-residue protein sequence, read N- to C-terminus: Nucleolar protein 4 (638 aa).

Disordered stretches follow at residues 210-312 (QQDE…SPLS), 343-403 (EREA…TDGV), 503-535 (NAAK…TYST), and 573-603 (SSGP…QLSP). Positions 211 to 225 (QDEDESSIESDEFDM) are enriched in acidic residues. Polar residues-rich tracts occupy residues 229–254 (TRMS…NLHG), 263–281 (ESFN…SGGT), 302–312 (QPLNLSDSPLS), and 351–363 (SKSP…SYDS). 3 stretches are compositionally biased toward basic and acidic residues: residues 364–374 (GKNESVDRGAE), 391–403 (HDDS…TDGV), and 503–515 (NAAK…RQQD). Low complexity predominate over residues 588 to 597 (SSGSSSSSNS).

In terms of tissue distribution, expressed predominantly in fetal brain, adult brain and testis.

It is found in the nucleus. Its subcellular location is the nucleolus. The chain is Nucleolar protein 4 (NOL4) from Homo sapiens (Human).